Consider the following 549-residue polypeptide: Glutamyl-tRNA(Gln) amidotransferase subunit B, mitochondrial (549 aa).

The N-terminal 23 residues, 1-23 (MLRISRDTKIVARVTHVTKSRTY), are a transit peptide targeting the mitochondrion.

This sequence belongs to the GatB/GatE family. GatB subfamily. As to quaternary structure, subunit of the heterotrimeric GatFAB amidotransferase (AdT) complex, composed of A, B and F subunits.

It is found in the mitochondrion. It catalyses the reaction L-glutamyl-tRNA(Gln) + L-glutamine + ATP + H2O = L-glutaminyl-tRNA(Gln) + L-glutamate + ADP + phosphate + H(+). Functionally, allows the formation of correctly charged Gln-tRNA(Gln) through the transamidation of misacylated Glu-tRNA(Gln) in the mitochondria. The reaction takes place in the presence of glutamine and ATP through an activated gamma-phospho-Glu-tRNA(Gln). The sequence is that of Glutamyl-tRNA(Gln) amidotransferase subunit B, mitochondrial from Yarrowia lipolytica (strain CLIB 122 / E 150) (Yeast).